The following is a 181-amino-acid chain: MRLVLLGPPGAGKGTQAAILSEKLRIPHISTGDLFRANIGEGTPLGKEAKSYIDAGKLVPTDVTARMVKARLQKDDAEVGFLLDGFPRTVEQAEILKEMLKGFGVELNGVINYEVAEDVVVERMLARGRADDNEDTIRTRLQVYRDETAPLIRHYGDDIITIKAEGSIEDINARTLGALGK.

Residue 10–15 (GAGKGT) coordinates ATP. Residues 30-59 (STGDLFRANIGEGTPLGKEAKSYIDAGKLV) are NMP. Residues T31, R36, 57 to 59 (KLV), 85 to 88 (GFPR), and Q92 contribute to the AMP site. Positions 126 to 132 (ARGRADD) are LID. R127 is a binding site for ATP. Positions 129 and 140 each coordinate AMP. An ATP-binding site is contributed by G166.

The protein belongs to the adenylate kinase family. In terms of assembly, monomer.

It is found in the cytoplasm. The catalysed reaction is AMP + ATP = 2 ADP. It functions in the pathway purine metabolism; AMP biosynthesis via salvage pathway; AMP from ADP: step 1/1. Its function is as follows. Catalyzes the reversible transfer of the terminal phosphate group between ATP and AMP. Plays an important role in cellular energy homeostasis and in adenine nucleotide metabolism. The protein is Adenylate kinase of Corynebacterium diphtheriae (strain ATCC 700971 / NCTC 13129 / Biotype gravis).